A 531-amino-acid polypeptide reads, in one-letter code: Apolipoprotein N-acyltransferase (531 aa).

A run of 7 helical transmembrane segments spans residues 8 to 28 (IILL…LLAV), 34 to 54 (FGIF…IDGV), 69 to 89 (PAAI…WWLG), 105 to 125 (LTVV…VVIA), 136 to 156 (IAAL…LFTG), 178 to 198 (VVNL…PALI), and 206 to 226 (AGLA…FYRL). The CN hydrolase domain occupies 243–493 (VQPVIDQAKK…RGVIDTILPG (251 aa)). Residue Glu287 is the Proton acceptor of the active site. Lys351 is a catalytic residue. Catalysis depends on Cys405, which acts as the Nucleophile. A helical transmembrane segment spans residues 507–527 (IFWLTTGILFLVAAISRLGFN).

This sequence belongs to the CN hydrolase family. Apolipoprotein N-acyltransferase subfamily.

Its subcellular location is the cell inner membrane. The catalysed reaction is N-terminal S-1,2-diacyl-sn-glyceryl-L-cysteinyl-[lipoprotein] + a glycerophospholipid = N-acyl-S-1,2-diacyl-sn-glyceryl-L-cysteinyl-[lipoprotein] + a 2-acyl-sn-glycero-3-phospholipid + H(+). The protein operates within protein modification; lipoprotein biosynthesis (N-acyl transfer). Functionally, catalyzes the phospholipid dependent N-acylation of the N-terminal cysteine of apolipoprotein, the last step in lipoprotein maturation. The chain is Apolipoprotein N-acyltransferase from Rhizobium meliloti (strain 1021) (Ensifer meliloti).